The following is a 499-amino-acid chain: Thioredoxin reductase 1, cytoplasmic (499 aa).

FAD is bound by residues 22 to 23, 42 to 43, 58 to 59, and 63 to 67; these read SG, DF, TC, and SCIPK. Cysteine 59 and cysteine 64 are oxidised to a cystine. The residue at position 68 (lysine 68) is an N6-succinyllysine. At tyrosine 131 the chain carries Phosphotyrosine. FAD-binding positions include 131–132 and threonine 161; that span reads YG. NADP(+) is bound by residues arginine 166, 198–204, 221–222, arginine 226, 226–228, 292–293, and lysine 315; these read ASYVALE, RS, RGF, and GR. Tyrosine 200 contributes to the FAD binding site. Residues aspartate 334, 341–343, and histidine 472 contribute to the FAD site; that span reads ELT. An NADP(+)-binding site is contributed by glutamate 341. Histidine 472 (proton acceptor) is an active-site residue. The cysteinyl-selenocysteine (Cys-Sec) cross-link spans 497 to 498; the sequence is CU. Selenocysteine 498 is a non-standard amino acid (selenocysteine).

The protein belongs to the class-I pyridine nucleotide-disulfide oxidoreductase family. Homodimer. FAD serves as cofactor. Post-translationally, ISGylated.

The protein resides in the cytoplasm. The enzyme catalyses [thioredoxin]-dithiol + NADP(+) = [thioredoxin]-disulfide + NADPH + H(+). The catalysed reaction is H2O2 + NADPH + H(+) = NADP(+) + 2 H2O. Functionally, reduces disulfideprotein thioredoxin (Trx) to its dithiol-containing form. Homodimeric flavoprotein involved in the regulation of cellular redox reactions, growth and differentiation. Contains a selenocysteine residue at the C-terminal active site that is essential for catalysis. Also has reductase activity on hydrogen peroxide (H2O2). The chain is Thioredoxin reductase 1, cytoplasmic (TXNRD1) from Sus scrofa (Pig).